A 690-amino-acid chain; its full sequence is Polyribonucleotide nucleotidyltransferase (690 aa).

Residues Asp-482 and Asp-488 each coordinate Mg(2+). In terms of domain architecture, KH spans 549–608 (PRIITIQINPDRIRDVIGPGGKVIRALTEETGATIDIQDNGTVTIASVDGEAGAAAKRRI). In terms of domain architecture, S1 motif spans 618 to 686 (DTIYDGKVAK…RQGKIKLSMK (69 aa)).

Belongs to the polyribonucleotide nucleotidyltransferase family. In terms of assembly, component of the RNA degradosome, which is a multiprotein complex involved in RNA processing and mRNA degradation. Requires Mg(2+) as cofactor.

It is found in the cytoplasm. The enzyme catalyses RNA(n+1) + phosphate = RNA(n) + a ribonucleoside 5'-diphosphate. In terms of biological role, involved in mRNA degradation. Catalyzes the phosphorolysis of single-stranded polyribonucleotides processively in the 3'- to 5'-direction. The polypeptide is Polyribonucleotide nucleotidyltransferase (Acidithiobacillus ferrooxidans (strain ATCC 23270 / DSM 14882 / CIP 104768 / NCIMB 8455) (Ferrobacillus ferrooxidans (strain ATCC 23270))).